The sequence spans 506 residues: Protein MGF 505-9R (506 aa).

ANK repeat units follow at residues 54 to 83, 253 to 283, and 313 to 343; these read SIHK…NLKY, QVDT…EIVE, and FVKK…KINL.

It belongs to the asfivirus MGF 505 family.

In terms of biological role, plays a role in virus cell tropism, and may be required for efficient virus replication in macrophages. In African swine fever virus (isolate Tick/Malawi/Lil 20-1/1983) (ASFV), this protein is Protein MGF 505-9R.